The following is a 352-amino-acid chain: DNA-directed RNA polymerase subunit alpha (352 aa).

Positions 1–226 are alpha N-terminal domain (alpha-NTD); that stretch reads MLISQRPTLT…ELFGLARELN (226 aa). The alpha C-terminal domain (alpha-CTD) stretch occupies residues 243–352; sequence HIASFGLPIE…EQDYAETEQL (110 aa). The segment at 324–352 is disordered; that stretch reads DASTGTWSDSGTFSDNDGGEQDYAETEQL. Over residues 326-338 the composition is skewed to polar residues; it reads STGTWSDSGTFSD. The span at 340-352 shows a compositional bias: acidic residues; the sequence is DGGEQDYAETEQL.

Belongs to the RNA polymerase alpha chain family. In terms of assembly, homodimer. The RNAP catalytic core consists of 2 alpha, 1 beta, 1 beta' and 1 omega subunit. When a sigma factor is associated with the core the holoenzyme is formed, which can initiate transcription.

It catalyses the reaction RNA(n) + a ribonucleoside 5'-triphosphate = RNA(n+1) + diphosphate. DNA-dependent RNA polymerase catalyzes the transcription of DNA into RNA using the four ribonucleoside triphosphates as substrates. The protein is DNA-directed RNA polymerase subunit alpha of Nocardia farcinica (strain IFM 10152).